Consider the following 553-residue polypeptide: Chaperonin GroEL 1 (553 aa).

ATP contacts are provided by residues 29–32 (TIGP), 86–90 (DGTTT), Gly-413, 476–478 (NAL), and Asp-492. Residues 520 to 543 (DKPEPPAPAGGGGDPMGGMGGMDP) form a disordered region. Positions 528 to 543 (AGGGGDPMGGMGGMDP) are enriched in gly residues.

This sequence belongs to the chaperonin (HSP60) family. As to quaternary structure, forms a cylinder of 14 subunits composed of two heptameric rings stacked back-to-back. Interacts with the co-chaperonin GroES.

Its subcellular location is the cytoplasm. It carries out the reaction ATP + H2O + a folded polypeptide = ADP + phosphate + an unfolded polypeptide.. In terms of biological role, together with its co-chaperonin GroES, plays an essential role in assisting protein folding. The GroEL-GroES system forms a nano-cage that allows encapsulation of the non-native substrate proteins and provides a physical environment optimized to promote and accelerate protein folding. The polypeptide is Chaperonin GroEL 1 (Synechococcus sp. (strain CC9311)).